A 218-amino-acid polypeptide reads, in one-letter code: Cell division protein SepF (218 aa).

The interval 25 to 115 (DVAASTDNVI…IANRREQYQQ (91 aa)) is disordered. Positions 29–43 (STDNVIPRSQQSVRA) are enriched in polar residues. The segment covering 47–63 (PKQEPRNNHVQQDHQAR) has biased composition (basic and acidic residues). Over residues 102–115 (STSSIANRREQYQQ) the composition is skewed to polar residues.

The protein belongs to the SepF family. As to quaternary structure, homodimer. Interacts with FtsZ.

The protein resides in the cytoplasm. Functionally, cell division protein that is part of the divisome complex and is recruited early to the Z-ring. Probably stimulates Z-ring formation, perhaps through the cross-linking of FtsZ protofilaments. Its function overlaps with FtsA. This chain is Cell division protein SepF, found in Streptococcus pyogenes serotype M5 (strain Manfredo).